A 38-amino-acid polypeptide reads, in one-letter code: Large ribosomal subunit protein bL36 (38 aa).

This sequence belongs to the bacterial ribosomal protein bL36 family.

The protein is Large ribosomal subunit protein bL36 of Cellvibrio japonicus (strain Ueda107) (Pseudomonas fluorescens subsp. cellulosa).